Reading from the N-terminus, the 161-residue chain is UPF0262 protein Rru_A2770 (161 aa).

The protein belongs to the UPF0262 family.

The chain is UPF0262 protein Rru_A2770 from Rhodospirillum rubrum (strain ATCC 11170 / ATH 1.1.1 / DSM 467 / LMG 4362 / NCIMB 8255 / S1).